A 495-amino-acid chain; its full sequence is Serine/threonine-protein kinase F (495 aa).

In terms of domain architecture, Protein kinase spans 46–314; that stretch reads YLPVKLLGQG…ASAEEVLAVL (269 aa). Residues 52–60 and Lys77 each bind ATP; that span reads LGQGGFGAA. Asp187 acts as the Proton acceptor in catalysis. Residues 316-354 are disordered; that stretch reads GGKGNQGKAPPGATVSTPQGTNTQIQPTPASSASPLTAP. The segment covering 329–350 has biased composition (polar residues); that stretch reads TVSTPQGTNTQIQPTPASSASP.

It belongs to the protein kinase superfamily. Ser/Thr protein kinase family.

The enzyme catalyses L-seryl-[protein] + ATP = O-phospho-L-seryl-[protein] + ADP + H(+). It carries out the reaction L-threonyl-[protein] + ATP = O-phospho-L-threonyl-[protein] + ADP + H(+). The chain is Serine/threonine-protein kinase F (spkF) from Synechocystis sp. (strain ATCC 27184 / PCC 6803 / Kazusa).